Here is a 727-residue protein sequence, read N- to C-terminus: Iron-sulfur clusters transporter ATM1, mitochondrial (727 aa).

A mitochondrion-targeting transit peptide spans 1–25 (MLIGGAQNRLYQLRTSNILGLLRTR). Topologically, residues 26–138 (SALRVGSKVE…PRGNTKVKVR (113 aa)) are mitochondrial matrix. The segment at 87-107 (KSKLPNEDTAHNASEKNSKKT) is disordered. Residues 90–107 (LPNEDTAHNASEKNSKKT) show a composition bias toward basic and acidic residues. Residues 139 to 160 (VLLALALLIGAKVLNVQVPFFF) traverse the membrane as a helical segment. The ABC transmembrane type-1 domain occupies 139–429 (VLLALALLIG…LGSVYRELKQ (291 aa)). The Mitochondrial intermembrane portion of the chain corresponds to 161-183 (KQIIDGMNVDWSDATVALPAALG). The chain crosses the membrane as a helical span at residues 184–207 (LTIMCYGLARFGAVLFGELRNAIF). Over 208–256 (ARVAQNAIRNVSLQTFEHLMKLDLGWHLSRQTGGLTRAMDRGTKGISYV) the chain is Mitochondrial matrix. Residues 257 to 280 (LSAMVFHIIPITFEISVVCGILTY) traverse the membrane as a helical segment. Residue Gln281 is a topological domain, mitochondrial intermembrane. The helical transmembrane segment at 282 to 302 (FGASFAGITFTTMLLYSIFTI) threads the bilayer. The Mitochondrial matrix portion of the chain corresponds to 303–368 (RTTAWRTRFR…SQVKVAQSLA (66 aa)). Residues 308 to 312 (RTRFR) and 371 to 374 (NSGQ) each bind glutathione. The chain crosses the membrane as a helical span at residues 369-387 (FLNSGQSLIFTTALTGMMY). The Mitochondrial intermembrane portion of the chain corresponds to 388 to 402 (MGCTGVIGGDLTVGD). Residues 403-424 (LVLINQLVFQLSVPLNFLGSVY) form a helical membrane-spanning segment. Position 421 (Gly421) interacts with glutathione. The Mitochondrial matrix portion of the chain corresponds to 425 to 727 (RELKQSLIDM…ETLEKLNKSI (303 aa)). The 237-residue stretch at 465-701 (IKFENVTFGY…ENSLYKELWR (237 aa)) folds into the ABC transporter domain. ATP contacts are provided by residues Tyr474 and 498–509 (GPSGSGKSTVLK).

The protein belongs to the ABC transporter superfamily. ABCB family. Heavy Metal importer (TC 3.A.1.210) subfamily. As to quaternary structure, homodimer.

It localises to the mitochondrion inner membrane. In terms of biological role, performs an essential function in the generation of cytoplasmic iron-sulfur proteins by mediating the ATP-dependent export of Fe/S cluster precursors synthesized by NFS1 and other mitochondrial proteins. Hydrolyzes ATP. Binds glutathione and may function by transporting a glutathione-conjugated iron-sulfur compound. The sequence is that of Iron-sulfur clusters transporter ATM1, mitochondrial from Candida glabrata (strain ATCC 2001 / BCRC 20586 / JCM 3761 / NBRC 0622 / NRRL Y-65 / CBS 138) (Yeast).